Consider the following 275-residue polypeptide: 3',5'-cyclic adenosine monophosphate phosphodiesterase CpdA (275 aa).

The Fe cation site is built by Asp22, His24, Asp64, Asn94, His164, His203, and His205. AMP contacts are provided by residues His24, Asp64, and 94–95; that span reads NH. An AMP-binding site is contributed by His205.

It belongs to the cyclic nucleotide phosphodiesterase class-III family. The cofactor is Fe(2+).

The catalysed reaction is 3',5'-cyclic AMP + H2O = AMP + H(+). In terms of biological role, hydrolyzes cAMP to 5'-AMP. Plays an important regulatory role in modulating the intracellular concentration of cAMP, thereby influencing cAMP-dependent processes. This is 3',5'-cyclic adenosine monophosphate phosphodiesterase CpdA from Escherichia coli O157:H7.